A 313-amino-acid chain; its full sequence is Cytosolic Fe-S cluster assembly factor NUBP1 homolog (313 aa).

The tract at residues 1–25 (MSDVPEDANAGCPGTGSAGAGKASG) is disordered. Positions 12, 26, 29, and 35 each coordinate [4Fe-4S] cluster. Residue 66–73 (GKGGVGKS) participates in ATP binding. Cys240 and Cys243 together coordinate [4Fe-4S] cluster.

The protein belongs to the Mrp/NBP35 ATP-binding proteins family. NUBP1/NBP35 subfamily. As to quaternary structure, heterotetramer of 2 NUBP1 and 2 NUBP2 chains. [4Fe-4S] cluster serves as cofactor.

It is found in the cytoplasm. The protein resides in the cell projection. Functionally, component of the cytosolic iron-sulfur (Fe/S) protein assembly (CIA) machinery. Required for maturation of extramitochondrial Fe-S proteins. The NUBP1-NUBP2 heterotetramer forms a Fe-S scaffold complex, mediating the de novo assembly of an Fe-S cluster and its transfer to target apoproteins. Regulates cilium formation and structure. In Caenorhabditis briggsae, this protein is Cytosolic Fe-S cluster assembly factor NUBP1 homolog.